The chain runs to 85 residues: MAHKKAGGSTRNGRDSEAKRLGVKMYGGQKIIPGNIIVRQRGTQFHAGYGVGMGKDHTLFAKIEGVIKFEVKGAFNRRYVSVVAA.

Belongs to the bacterial ribosomal protein bL27 family.

This chain is Large ribosomal subunit protein bL27, found in Pseudomonas fluorescens (strain SBW25).